Here is a 431-residue protein sequence, read N- to C-terminus: C4-dicarboxylate transport protein (431 aa).

A run of 8 helical transmembrane segments spans residues 8-28 (ILYVQVLFAIFVGILLGHFWP), 44-64 (LIKMIIGPIIFCTVVTGIAGM), 78-98 (LLYFEIVSTFALLIGLGAAHL), 148-168 (GDILQILLVSLFFGAALAAIG), 188-208 (IVHVITKVAPIGAFGAMAFTI), 222-242 (LIGTFYFTAIVFVVFVLGAIA), 307-327 (IYMTMAVIFIAQATGIELTLL), and 355-375 (AATLAVVPTIPVAGMVLILGI).

This sequence belongs to the dicarboxylate/amino acid:cation symporter (DAACS) (TC 2.A.23) family.

The protein localises to the cell inner membrane. Responsible for the transport of dicarboxylates such as succinate, fumarate, and malate from the periplasm across the membrane. The sequence is that of C4-dicarboxylate transport protein from Cupriavidus pinatubonensis (strain JMP 134 / LMG 1197) (Cupriavidus necator (strain JMP 134)).